The chain runs to 392 residues: N-acetylneuraminate epimerase (392 aa).

A signal peptide spans 1 to 35; it reads MTQIYHQYKKKLSTKVILLSALTLCITFSLPYANA. 7 Kelch repeats span residues 56–100, 102–155, 157–192, 193–238, 241–290, 312–361, and 363–392; these read HLYV…VALS, KLYV…TTLN, TQAL…AVVN, AYFD…TAKK, LILI…LAGA, QQFN…QDKD, and VILL…LHLE. E247 functions as the Proton acceptor in the catalytic mechanism.

The protein belongs to the NanM family. Homodimer.

The protein resides in the periplasm. It catalyses the reaction N-acetyl-alpha-neuraminate = N-acetyl-beta-neuraminate. Functionally, converts alpha-N-acetylneuranimic acid (Neu5Ac) to the beta-anomer, accelerating the equilibrium between the alpha- and beta-anomers. Probably facilitates sialidase-negative bacteria to compete successfully for limited amounts of extracellular Neu5Ac, which is likely taken up in the beta-anomer. In addition, the rapid removal of sialic acid from solution might be advantageous to the bacterium to damp down host responses. In Yersinia enterocolitica serotype O:8 / biotype 1B (strain NCTC 13174 / 8081), this protein is N-acetylneuraminate epimerase.